The primary structure comprises 714 residues: MAEFTNMLMNPWVLHLQKLELELKCPLCLKLLNRPVLLPCDHVFCDSCVHKSSQVESGCPVCKSKHPKKARRDLRFMESVISIYKSLNAAVSVHLPQLQIPNDCNYKNDALNNSNSPKHGESEDSEMTDKDVSKRSGGTDSSSRDGSPLPTSEESDPRPKHQDWTEKQLSDHLLLYEFESEYDAANHTPESYTEQAAKNVRDITASEQPSNAARKRICGDSFIQESSPNPKTQDPTLLRLMESLRSDDPTDYVKAQNHQQLPKSHTEQDSKRKRDITASDAMENHLKVPKRENNLMQKSADIDCNGKCSANSDDQLSEKISKALEQTSSNITICGFCQSARVSEATGEMLHYSRGRPVDGDDIFRSNVIHVHSACIEWAPQVYYEGDTVKNLKAELARGMKIKCTKCSLKGAALGCFVKSCRRSYHVPCAREISRCRWDYEDFLLLCPAHSSVKFPNEKSGHRVSRAEPLPKINPAELCSLEQTPAFTKELVLCGSALSKSDKKLMESLAVRFNATISRYWNPSVTHVIASTDEKGACTRTLKVLMGILNGKWIINAAWMKASLKASQPVDEEPFEIQIDTQGCQDGPKTARLRAETNKPKLFEGLKFYFFGDFYKGYKEDLQNLVKVAGGTILNTEDELGAESSNNVNDQRSSSIVVYNIDPPHGCALGEEVTIIWQRANDAEALASQTGSRLVGHTWVLESIAGYKLHPVIG.

The RING-type zinc-finger motif lies at 25–63; the sequence is CPLCLKLLNRPVLLPCDHVFCDSCVHKSSQVESGCPVCK. Disordered regions lie at residues 106-165 and 254-283; these read YKND…QDWT and KAQN…DAME. Residues 118–134 show a composition bias toward basic and acidic residues; the sequence is KHGESEDSEMTDKDVSK. Residues 135–147 show a composition bias toward low complexity; it reads RSGGTDSSSRDGS. Composition is skewed to basic and acidic residues over residues 155–165 and 264–283; these read SDPRPKHQDWT and SHTE…DAME. The C2HC pre-PHD-type zinc finger occupies 331-382; that stretch reads ITICGFCQSARVSEATGEMLHYSRGRPVDGDDIFRSNVIHVHSACIEWAPQV. A PHD-type zinc finger spans residues 402–451; it reads IKCTKCSLKGAALGCFVKSCRRSYHVPCAREISRCRWDYEDFLLLCPAHS. 2 consecutive BRCT domains span residues 482–577 and 598–713; these read EQTP…PFEI and NKPK…HPVI.

Component of a DNA-protein complex on WUS and WOX5 promoters. Interacts with SYD. Forms heterodimer with BRCA1. In terms of tissue distribution, expressed in the shoot apical meristem (SAM), roots, flowers, embryos and seedlings. Mostly expressed in flowers and siliques, and, to a lower extent, in roots, rosette leaves, inflorescence and young cauline leaves.

The protein localises to the nucleus. In terms of biological role, binds specifically to H3K4me3 regions of target genes (e.g. WUS and WOX5) promoters to repress their transcription via chromatin remodeling. Required for the shoot apical meristem (SAM) organization and maintenance, by confining WUS expression to the organizing center, and for the quiescent center (QC) development in the root apical meristem (RAM), by repressing WOX5 expression in the root proximal meristem. Plays a role in DNA repair and in cell-cycle control. Required for the repair of DNA double-strand breaks (DSBs), both natural and induced by genotoxic stress, by homologous recombination (HR). The polypeptide is BRCA1-associated RING domain protein 1 (Arabidopsis thaliana (Mouse-ear cress)).